The following is a 417-amino-acid chain: Phosphoglycerate kinase 1 (417 aa).

Serine 2 bears the N-acetylserine mark. A phosphoserine mark is found at serine 2 and serine 4. At lysine 6 the chain carries N6-succinyllysine. The residue at position 11 (lysine 11) is an N6-acetyllysine. Positions 23, 24, 25, 26, 38, and 39 each coordinate (2R)-3-phosphoglycerate. Positions 38–43 (QRIKAA) are mitochondrial targeting region exposed following cis-trans isomerization by PIN1 and recognized by the TOM complex for mitochondrial translocation of the protein. Lysine 48 is modified (N6-acetyllysine; alternate). Lysine 48 is modified (N6-succinyllysine; alternate). The (2R)-3-phosphoglycerate site is built by serine 62, histidine 63, glycine 65, and arginine 66. Lysine 75 is subject to N6-acetyllysine. Tyrosine 76 is modified (phosphotyrosine). Lysine 86 and lysine 91 each carry N6-acetyllysine. Lysine 97 carries the N6-acetyllysine; alternate modification. N6-(2-hydroxyisobutyryl)lysine; alternate is present on lysine 97. (2R)-3-phosphoglycerate-binding residues include leucine 122 and arginine 123. Lysine 131 carries the N6-acetyllysine; alternate modification. Lysine 131 is modified (N6-malonyllysine; alternate). Lysine 146 is modified (N6-acetyllysine). (2R)-3-phosphoglycerate contacts are provided by histidine 170 and arginine 171. Residue lysine 191 is modified to N6-succinyllysine. Residue tyrosine 196 is modified to Phosphotyrosine. Lysine 199 is modified (N6-acetyllysine). At serine 203 the chain carries Phosphoserine. Glycine 214 contributes to the ADP binding site. Glycine 214 contacts CDP. AMP is bound by residues alanine 215 and lysine 216. Alanine 215 lines the ATP pocket. Alanine 215 is a Mg(2+) binding site. Lysine 216 is modified (N6-(2-hydroxyisobutyryl)lysine). The Mg(2+) site is built by alanine 218 and aspartate 219. Aspartate 219 lines the CDP pocket. Lysine 220 is a binding site for AMP. An ATP-binding site is contributed by lysine 220. Lysine 220 carries the N6-(2-hydroxyisobutyryl)lysine modification. Position 238 (glycine 238) interacts with ADP. Glycine 238 contacts CDP. Glycine 239 contacts AMP. An ATP-binding site is contributed by glycine 239. Lysine 267 and lysine 291 each carry N6-acetyllysine. Position 313 (glycine 313) interacts with AMP. Residue glycine 313 coordinates ATP. Lysine 323 is subject to N6-(2-hydroxyisobutyryl)lysine. CDP contacts are provided by glycine 338, valine 340, and phenylalanine 343. Residue phenylalanine 343 coordinates ADP. Glutamate 344 serves as a coordination point for AMP. An ATP-binding site is contributed by glutamate 344. Serine 354 carries the phosphoserine modification. Lysine 361 carries the post-translational modification N6-acetyllysine. Aspartate 375 and threonine 376 together coordinate ATP. Aspartate 375 contributes to the Mg(2+) binding site.

The protein belongs to the phosphoglycerate kinase family. In terms of assembly, monomer. Interacts with kinase MAPK1/ERK2; the interaction is direct, occurs under hypoxic conditions, and promotes its interaction with PIN1. Interacts with peptidyl-prolyl cis-trans isomerase PIN1; the interaction is direct, occurs under hypoxic conditions, and targets the protein to the mitochondrion by promoting interactions with the TOM complex. Interacts with mitochondrial circRNA mcPGK1 (via its 2nd stem-loop); the interaction is direct and targets the protein to the mitochondrion by promoting interactions with the TOM complex. Interacts with pyruvate dehydrogenase kinase PDK1; the interaction is direct, occurs under hypoxic conditions and leads to PDK1-mediated inhibition of pyruvate dehydrogenase complex activity. Mg(2+) is required as a cofactor. Post-translationally, phosphorylated at Ser-203 by MAPK1/ERK2 under hypoxic conditions, which promotes its mitochondrial targeting.

It is found in the cytoplasm. The protein resides in the cytosol. It localises to the mitochondrion matrix. It carries out the reaction (2R)-3-phosphoglycerate + ATP = (2R)-3-phospho-glyceroyl phosphate + ADP. It catalyses the reaction L-seryl-[protein] + ATP = O-phospho-L-seryl-[protein] + ADP + H(+). It participates in carbohydrate degradation; glycolysis; pyruvate from D-glyceraldehyde 3-phosphate: step 2/5. Catalyzes one of the two ATP producing reactions in the glycolytic pathway via the reversible conversion of 1,3-diphosphoglycerate to 3-phosphoglycerate. Both L- and D- forms of purine and pyrimidine nucleotides can be used as substrates, but the activity is much lower on pyrimidines. In addition to its role as a glycolytic enzyme, it seems that PGK-1 acts as a polymerase alpha cofactor protein (primer recognition protein). Acts as a protein kinase when localized to the mitochondrion where it phosphorylates pyruvate dehydrogenase kinase PDK1 to inhibit pyruvate dehydrogenase complex activity and suppress the formation of acetyl-coenzyme A from pyruvate, and consequently inhibit oxidative phosphorylation and promote glycolysis. May play a role in sperm motility. The protein is Phosphoglycerate kinase 1 (Pgk1) of Rattus norvegicus (Rat).